A 1549-amino-acid chain; its full sequence is Ferredoxin-dependent glutamate synthase (1549 aa).

The For GATase activity role is filled by Cys-37. The 399-residue stretch at 37–435 (CGVGFIAHLD…PGEMIVLDLQ (399 aa)) folds into the Glutamine amidotransferase type-2 domain. Residue 1116–1173 (LHEVHCLLVENNLREKVILRVDGGLRTGQDVVMAALLGADEYGFGTIAMIAGGCIMAR) coordinates FMN. Positions 1169, 1175, and 1180 each coordinate [3Fe-4S] cluster.

Belongs to the glutamate synthase family. As to quaternary structure, monomer. [3Fe-4S] cluster serves as cofactor. Requires FAD as cofactor. The cofactor is FMN.

It localises to the plastid. The protein localises to the chloroplast stroma. It carries out the reaction 2 oxidized [2Fe-2S]-[ferredoxin] + 2 L-glutamate = L-glutamine + 2 reduced [2Fe-2S]-[ferredoxin] + 2-oxoglutarate + 2 H(+). It participates in amino-acid biosynthesis; L-glutamate biosynthesis via GLT pathway; L-glutamate from 2-oxoglutarate and L-glutamine (ferredoxin route): step 1/1. It functions in the pathway energy metabolism; nitrogen metabolism. This Cyanidium caldarium (Red alga) protein is Ferredoxin-dependent glutamate synthase (gltB).